The sequence spans 146 residues: Hemoglobin subunit beta (146 aa).

Residues 2–146 (QWTAEEKQLI…VAHALARKYH (145 aa)) enclose the Globin domain. H63 and H92 together coordinate heme b.

The protein belongs to the globin family. In terms of assembly, heterotetramer of two alpha chains and two beta chains. In terms of tissue distribution, red blood cells.

Functionally, involved in oxygen transport from the lung to the various peripheral tissues. The sequence is that of Hemoglobin subunit beta (HBB) from Rhea americana (Greater rhea).